The sequence spans 407 residues: NADH dehydrogenase [ubiquinone] 1 alpha subcomplex subunit 10, mitochondrial (407 aa).

A mitochondrion-targeting transit peptide spans 1-60 (MTAVFRVGLVRLVSRATQSPNLLQAQTNALPAAFQQRCSISGKTMRGGPRVPKAAPYPYK).

It belongs to the complex I NDUFA10 subunit family. Complex I is composed of 45 different subunits. This a component of the hydrophobic protein fraction. Forms a complex including sicily, ND-42 and Hsp83; the complex is necessary to chaperone ND-42 in the cytoplasm before mitochondrial import; the interaction between sicily and ND-42 is direct and occurs preferably between the unprocessed forms in the cytoplasm. Requires FAD as cofactor. Expressed in muscles (at protein level).

It is found in the mitochondrion matrix. It localises to the cytoplasm. Its function is as follows. Accessory subunit of the mitochondrial membrane respiratory chain NADH dehydrogenase (Complex I), that is believed not to be involved in catalysis. Complex I functions in the transfer of electrons from NADH to the respiratory chain. The immediate electron acceptor for the enzyme is believed to be ubiquinone. In Drosophila melanogaster (Fruit fly), this protein is NADH dehydrogenase [ubiquinone] 1 alpha subcomplex subunit 10, mitochondrial.